Here is a 158-residue protein sequence, read N- to C-terminus: SsrA-binding protein (158 aa).

The span at 133–152 shows a compositional bias: basic and acidic residues; it reads KRQTLREQQDNREAQREMRE. Residues 133–158 are disordered; that stretch reads KRQTLREQQDNREAQREMRERNRRRG.

The protein belongs to the SmpB family.

The protein resides in the cytoplasm. Functionally, required for rescue of stalled ribosomes mediated by trans-translation. Binds to transfer-messenger RNA (tmRNA), required for stable association of tmRNA with ribosomes. tmRNA and SmpB together mimic tRNA shape, replacing the anticodon stem-loop with SmpB. tmRNA is encoded by the ssrA gene; the 2 termini fold to resemble tRNA(Ala) and it encodes a 'tag peptide', a short internal open reading frame. During trans-translation Ala-aminoacylated tmRNA acts like a tRNA, entering the A-site of stalled ribosomes, displacing the stalled mRNA. The ribosome then switches to translate the ORF on the tmRNA; the nascent peptide is terminated with the 'tag peptide' encoded by the tmRNA and targeted for degradation. The ribosome is freed to recommence translation, which seems to be the essential function of trans-translation. The polypeptide is SsrA-binding protein (Pseudarthrobacter chlorophenolicus (strain ATCC 700700 / DSM 12829 / CIP 107037 / JCM 12360 / KCTC 9906 / NCIMB 13794 / A6) (Arthrobacter chlorophenolicus)).